Consider the following 164-residue polypeptide: Type II secretion system protein M (164 aa).

Residues 1 to 17 (MNELRQRWQAMSQRERQ) are Cytoplasmic-facing. Residues 18–38 (LMVVCAAVLLLCVVYYAILQP) traverse the membrane as a helical segment. Residues 39 to 164 (WQEREDLWER…RLMLERTDEA (126 aa)) are Periplasmic-facing.

The protein belongs to the GSP M family. As to quaternary structure, type II secretion system is composed of four main components: the outer membrane complex, the inner membrane complex, the cytoplasmic secretion ATPase and the periplasm-spanning pseudopilus. Forms homodimers. Interacts with OutL/GspL. Interacts with OutE/GspE and OutF/GspF.

It localises to the cell inner membrane. Functionally, inner membrane component of the type II secretion system required for the energy-dependent secretion of extracellular factors such as proteases and toxins from the periplasm. Plays a role in the complex assembly and recruits OutL resulting in a stable complex in the inner membrane. Provides thus a link between the energy-providing OutE protein in the cytoplasm and the rest of the T2SS machinery. In Pectobacterium carotovorum subsp. carotovorum (Erwinia carotovora subsp. carotovora), this protein is Type II secretion system protein M (outM).